The chain runs to 679 residues: Glycine--tRNA ligase beta subunit (679 aa).

The protein belongs to the class-II aminoacyl-tRNA synthetase family. In terms of assembly, tetramer of two alpha and two beta subunits.

The protein resides in the cytoplasm. It carries out the reaction tRNA(Gly) + glycine + ATP = glycyl-tRNA(Gly) + AMP + diphosphate. This is Glycine--tRNA ligase beta subunit from Streptococcus pyogenes serotype M12 (strain MGAS9429).